We begin with the raw amino-acid sequence, 332 residues long: Malate dehydrogenase, cytoplasmic (332 aa).

Residues Gly-11–Ala-17 and Asp-42 each bind NAD(+). Positions 92 and 98 each coordinate substrate. NAD(+)-binding positions include Asn-105, Gln-112, and Val-129 to Asn-131. Substrate is bound by residues Asn-131 and Arg-162. The active-site Proton acceptor is His-187.

It belongs to the LDH/MDH superfamily. MDH type 2 family. In terms of assembly, homodimer.

The protein localises to the cytoplasm. The enzyme catalyses (S)-malate + NAD(+) = oxaloacetate + NADH + H(+). Its activity is regulated as follows. By arsenate for both the forward and reverse reactions. Malate dehydrogenase. Has no activity with NADPH as substrate. Does not show lactate dehydrogenase activity. The sequence is that of Malate dehydrogenase, cytoplasmic from Taenia solium (Pork tapeworm).